Here is a 446-residue protein sequence, read N- to C-terminus: Exodeoxyribonuclease 7 large subunit (446 aa).

Belongs to the XseA family. Heterooligomer composed of large and small subunits.

Its subcellular location is the cytoplasm. The catalysed reaction is Exonucleolytic cleavage in either 5'- to 3'- or 3'- to 5'-direction to yield nucleoside 5'-phosphates.. In terms of biological role, bidirectionally degrades single-stranded DNA into large acid-insoluble oligonucleotides, which are then degraded further into small acid-soluble oligonucleotides. This is Exodeoxyribonuclease 7 large subunit from Ligilactobacillus salivarius (strain UCC118) (Lactobacillus salivarius).